The chain runs to 97 residues: NADH-quinone oxidoreductase subunit K (97 aa).

The next 3 helical transmembrane spans lie at 1-21, 25-45, and 57-77; these read MSEYLILCSILFSLGAFGVLY, ILVMFMCIELMLNSVNLLMVY, and VFVFFIMAVAAAEITIGLAIL.

The protein belongs to the complex I subunit 4L family. In terms of assembly, NDH-1 is composed of 14 different subunits. Subunits NuoA, H, J, K, L, M, N constitute the membrane sector of the complex.

It localises to the cell inner membrane. It carries out the reaction a quinone + NADH + 5 H(+)(in) = a quinol + NAD(+) + 4 H(+)(out). In terms of biological role, NDH-1 shuttles electrons from NADH, via FMN and iron-sulfur (Fe-S) centers, to quinones in the respiratory chain. The immediate electron acceptor for the enzyme in this species is believed to be a menaquinone. Couples the redox reaction to proton translocation (for every two electrons transferred, four hydrogen ions are translocated across the cytoplasmic membrane), and thus conserves the redox energy in a proton gradient. This chain is NADH-quinone oxidoreductase subunit K, found in Cytophaga hutchinsonii (strain ATCC 33406 / DSM 1761 / CIP 103989 / NBRC 15051 / NCIMB 9469 / D465).